The primary structure comprises 129 residues: Large ribosomal subunit protein uL22 (129 aa).

It belongs to the universal ribosomal protein uL22 family. As to quaternary structure, part of the 50S ribosomal subunit.

In terms of biological role, this protein binds specifically to 23S rRNA; its binding is stimulated by other ribosomal proteins, e.g. L4, L17, and L20. It is important during the early stages of 50S assembly. It makes multiple contacts with different domains of the 23S rRNA in the assembled 50S subunit and ribosome. Functionally, the globular domain of the protein is located near the polypeptide exit tunnel on the outside of the subunit, while an extended beta-hairpin is found that lines the wall of the exit tunnel in the center of the 70S ribosome. This is Large ribosomal subunit protein uL22 from Agrobacterium fabrum (strain C58 / ATCC 33970) (Agrobacterium tumefaciens (strain C58)).